A 406-amino-acid chain; its full sequence is Cysteine desulfurase (406 aa).

Lys-226 is modified (N6-(pyridoxal phosphate)lysine). The Cysteine persulfide intermediate role is filled by Cys-364.

This sequence belongs to the class-V pyridoxal-phosphate-dependent aminotransferase family. Csd subfamily. Homodimer. Interacts with SufE and the SufBCD complex composed of SufB, SufC and SufD. The interaction with SufE is required to mediate the direct transfer of the sulfur atom from the S-sulfanylcysteine. Requires pyridoxal 5'-phosphate as cofactor.

The protein resides in the cytoplasm. It catalyses the reaction (sulfur carrier)-H + L-cysteine = (sulfur carrier)-SH + L-alanine. The catalysed reaction is L-selenocysteine + AH2 = hydrogenselenide + L-alanine + A + H(+). Its pathway is cofactor biosynthesis; iron-sulfur cluster biosynthesis. Its function is as follows. Cysteine desulfurases mobilize the sulfur from L-cysteine to yield L-alanine, an essential step in sulfur metabolism for biosynthesis of a variety of sulfur-containing biomolecules. Component of the suf operon, which is activated and required under specific conditions such as oxidative stress and iron limitation. Acts as a potent selenocysteine lyase in vitro, that mobilizes selenium from L-selenocysteine. Selenocysteine lyase activity is however unsure in vivo. This is Cysteine desulfurase from Cronobacter sakazakii (strain ATCC BAA-894) (Enterobacter sakazakii).